A 673-amino-acid chain; its full sequence is UvrABC system protein B (673 aa).

Residues E26–R183 enclose the Helicase ATP-binding domain. Position 39-46 (G39–T46) interacts with ATP. The short motif at Y92–V115 is the Beta-hairpin element. The Helicase C-terminal domain occupies Q431–L597. In terms of domain architecture, UVR spans Q633 to L668.

The protein belongs to the UvrB family. In terms of assembly, forms a heterotetramer with UvrA during the search for lesions. Interacts with UvrC in an incision complex.

Its subcellular location is the cytoplasm. Functionally, the UvrABC repair system catalyzes the recognition and processing of DNA lesions. A damage recognition complex composed of 2 UvrA and 2 UvrB subunits scans DNA for abnormalities. Upon binding of the UvrA(2)B(2) complex to a putative damaged site, the DNA wraps around one UvrB monomer. DNA wrap is dependent on ATP binding by UvrB and probably causes local melting of the DNA helix, facilitating insertion of UvrB beta-hairpin between the DNA strands. Then UvrB probes one DNA strand for the presence of a lesion. If a lesion is found the UvrA subunits dissociate and the UvrB-DNA preincision complex is formed. This complex is subsequently bound by UvrC and the second UvrB is released. If no lesion is found, the DNA wraps around the other UvrB subunit that will check the other stand for damage. This chain is UvrABC system protein B, found in Salmonella agona (strain SL483).